Here is a 191-residue protein sequence, read N- to C-terminus: dCTP deaminase (191 aa).

DCTP-binding positions include 112-117 (KSTYAR), 136-138 (TLE), Gln157, Tyr173, and Gln183. The Proton donor/acceptor role is filled by Glu138.

The protein belongs to the dCTP deaminase family. In terms of assembly, homotrimer.

The enzyme catalyses dCTP + H2O + H(+) = dUTP + NH4(+). The protein operates within pyrimidine metabolism; dUMP biosynthesis; dUMP from dCTP (dUTP route): step 1/2. Functionally, catalyzes the deamination of dCTP to dUTP. The sequence is that of dCTP deaminase from Psychrobacter arcticus (strain DSM 17307 / VKM B-2377 / 273-4).